Consider the following 1032-residue polypeptide: Error-prone DNA polymerase (1032 aa).

Belongs to the DNA polymerase type-C family. DnaE2 subfamily.

The protein localises to the cytoplasm. It carries out the reaction DNA(n) + a 2'-deoxyribonucleoside 5'-triphosphate = DNA(n+1) + diphosphate. In terms of biological role, DNA polymerase involved in damage-induced mutagenesis and translesion synthesis (TLS). It is not the major replicative DNA polymerase. The sequence is that of Error-prone DNA polymerase from Hahella chejuensis (strain KCTC 2396).